Here is a 93-residue protein sequence, read N- to C-terminus: Small ribosomal subunit protein uS19 (93 aa).

The protein belongs to the universal ribosomal protein uS19 family.

Its function is as follows. Protein S19 forms a complex with S13 that binds strongly to the 16S ribosomal RNA. In Geobacter sulfurreducens (strain ATCC 51573 / DSM 12127 / PCA), this protein is Small ribosomal subunit protein uS19.